A 164-amino-acid chain; its full sequence is Phosphopantetheine adenylyltransferase (164 aa).

Substrate is bound at residue Ser-9. ATP is bound by residues Ser-9–Phe-10 and His-17. Substrate-binding residues include Lys-41, Val-78, and Arg-92. ATP contacts are provided by residues Gly-93–Arg-95, Glu-103, and Val-128–Thr-134.

This sequence belongs to the bacterial CoaD family. In terms of assembly, homohexamer. It depends on Mg(2+) as a cofactor.

It localises to the cytoplasm. It carries out the reaction (R)-4'-phosphopantetheine + ATP + H(+) = 3'-dephospho-CoA + diphosphate. Its pathway is cofactor biosynthesis; coenzyme A biosynthesis; CoA from (R)-pantothenate: step 4/5. Its function is as follows. Reversibly transfers an adenylyl group from ATP to 4'-phosphopantetheine, yielding dephospho-CoA (dPCoA) and pyrophosphate. The polypeptide is Phosphopantetheine adenylyltransferase (Brucella abortus (strain 2308)).